Here is a 56-residue protein sequence, read N- to C-terminus: Large ribosomal subunit protein bL32B (56 aa).

Residues 1 to 19 (MAVPKRRMSRSNTRHRRAQ) are compositionally biased toward basic residues. Positions 1-22 (MAVPKRRMSRSNTRHRRAQWKA) are disordered.

It belongs to the bacterial ribosomal protein bL32 family.

The chain is Large ribosomal subunit protein bL32B (rpmF2) from Streptomyces coelicolor (strain ATCC BAA-471 / A3(2) / M145).